The chain runs to 368 residues: Ceramide synthase hyl-1 (368 aa).

The next 7 helical transmembrane spans lie at 27 to 47, 92 to 112, 138 to 158, 165 to 185, 191 to 211, 225 to 245, and 275 to 295; these read FVDL…RILW, ILEC…GLYV, IWWY…GSTF, FWQL…SWTI, GTLI…GKLV, FVLF…FIVI, and LIVF…FIIL. One can recognise a TLC domain in the interval 90 to 303; it reads KKILECFWRF…ILRIAYRTST (214 aa). The disordered stretch occupies residues 306 to 368; sequence QAKDVRSDSD…ARHRRAPRKE (63 aa). Residues 343-353 show a composition bias toward acidic residues; the sequence is TDDDDDEGEEE. The span at 357–368 shows a compositional bias: basic residues; sequence RKARHRRAPRKE.

The protein belongs to the sphingosine N-acyltransferase family.

It is found in the membrane. The enzyme catalyses a very long-chain fatty acyl-CoA + a sphingoid base = an N-(very-long-chain fatty acyl)-sphingoid base + CoA + H(+). It catalyses the reaction 15-methylhexadecasphinganine + a fatty acyl-CoA = an N-acyl-15-methylhexadecasphinganine + CoA + H(+). It carries out the reaction a fatty acyl-CoA + sphinganine = an N-acylsphinganine + CoA + H(+). The catalysed reaction is sphinganine + tetradecanoyl-CoA = N-(tetradecanoyl)-sphinganine + CoA + H(+). The enzyme catalyses hexacosanoyl-CoA + sphinganine = N-hexacosanoylsphinganine + CoA + H(+). It functions in the pathway lipid metabolism; sphingolipid metabolism. Catalyzes the acylation of sphingoid bases to form ceramides, which are key players in cell signaling events such as extending lifespan and enhancing stress resistance. C.elegans contain specific sphingoid bases, which are unique or different in structure compared to the sphingoid bases found in other animals. Two examples of these distinctive compounds are: 15-methylhexadecasphinganine and 15-methylhexadecasphing-4-enine. Exhibits substrate preference for fatty acyl-coA chains containing carbon chain length (C16-C18) and very long chains (24 carbons and more). In Caenorhabditis elegans, this protein is Ceramide synthase hyl-1 (hyl-1).